The following is a 449-amino-acid chain: Exodeoxyribonuclease 7 large subunit (449 aa).

Belongs to the XseA family. In terms of assembly, heterooligomer composed of large and small subunits.

The protein resides in the cytoplasm. It carries out the reaction Exonucleolytic cleavage in either 5'- to 3'- or 3'- to 5'-direction to yield nucleoside 5'-phosphates.. Functionally, bidirectionally degrades single-stranded DNA into large acid-insoluble oligonucleotides, which are then degraded further into small acid-soluble oligonucleotides. The chain is Exodeoxyribonuclease 7 large subunit from Lacticaseibacillus paracasei (strain ATCC 334 / BCRC 17002 / CCUG 31169 / CIP 107868 / KCTC 3260 / NRRL B-441) (Lactobacillus paracasei).